The following is a 1222-amino-acid chain: DNA-directed RNA polymerase II subunit RPB2 (1222 aa).

Residue Asp-835 participates in Mg(2+) binding. The Zn(2+) site is built by Cys-1161, Cys-1164, Cys-1180, and Cys-1183. Residues 1161 to 1183 (CGICGLMTVVAKLKHNQFECRGC) form a C4-type zinc finger.

Belongs to the RNA polymerase beta chain family. Component of the RNA polymerase II (Pol II) complex consisting of 12 subunits.

Its subcellular location is the nucleus. The catalysed reaction is RNA(n) + a ribonucleoside 5'-triphosphate = RNA(n+1) + diphosphate. Functionally, DNA-dependent RNA polymerase catalyzes the transcription of DNA into RNA using the four ribonucleoside triphosphates as substrates. Second largest component of RNA polymerase II which synthesizes mRNA precursors and many functional non-coding RNAs. Proposed to contribute to the polymerase catalytic activity and forms the polymerase active center together with the largest subunit. Pol II is the central component of the basal RNA polymerase II transcription machinery. It is composed of mobile elements that move relative to each other. RPB2 is part of the core element with the central large cleft, the clamp element that moves to open and close the cleft and the jaws that are thought to grab the incoming DNA template. The chain is DNA-directed RNA polymerase II subunit RPB2 (RPB2) from Eremothecium gossypii (strain ATCC 10895 / CBS 109.51 / FGSC 9923 / NRRL Y-1056) (Yeast).